The primary structure comprises 512 residues: Zinc metalloprotease mde10 (512 aa).

The signal sequence occupies residues 1–15; the sequence is MRLVLLFSCVLAVSS. A glycan (N-linked (GlcNAc...) asparagine) is linked at Asn-35. One can recognise a Peptidase M12B domain in the interval 65 to 306; sequence QTLWIGVVAD…KYVSLSCLSK (242 aa). His-229 contributes to the Zn(2+) binding site. Glu-230 is an active-site residue. Zn(2+)-binding residues include His-233 and His-239. Disulfide bonds link Cys-246–Cys-254 and Cys-374–Cys-394. In terms of domain architecture, Disintegrin spans 315–402; that stretch reads LGTCGNGIVE…KCPVDENWDD (88 aa). Asn-432 is a glycosylation site (N-linked (GlcNAc...) asparagine).

The cofactor is Zn(2+). Post-translationally, glycosylated.

It is found in the endoplasmic reticulum. The protein resides in the spore wall. Has a role in the development of the spore envelope. This chain is Zinc metalloprotease mde10 (mde10), found in Schizosaccharomyces pombe (strain 972 / ATCC 24843) (Fission yeast).